Here is a 424-residue protein sequence, read N- to C-terminus: Enolase (424 aa).

Glutamine 165 contacts (2R)-2-phosphoglycerate. Residue glutamate 207 is the Proton donor of the active site. Positions 244, 283, and 310 each coordinate Mg(2+). Lysine 335, arginine 364, serine 365, and lysine 386 together coordinate (2R)-2-phosphoglycerate. The Proton acceptor role is filled by lysine 335.

This sequence belongs to the enolase family. Mg(2+) is required as a cofactor.

It localises to the cytoplasm. The protein resides in the secreted. The protein localises to the cell surface. The catalysed reaction is (2R)-2-phosphoglycerate = phosphoenolpyruvate + H2O. Its pathway is carbohydrate degradation; glycolysis; pyruvate from D-glyceraldehyde 3-phosphate: step 4/5. Its function is as follows. Catalyzes the reversible conversion of 2-phosphoglycerate (2-PG) into phosphoenolpyruvate (PEP). It is essential for the degradation of carbohydrates via glycolysis. The polypeptide is Enolase (Chlamydia trachomatis serovar L2 (strain ATCC VR-902B / DSM 19102 / 434/Bu)).